The chain runs to 149 residues: UPF0260 protein PFLU_1520 (149 aa).

This sequence belongs to the UPF0260 family.

This chain is UPF0260 protein PFLU_1520, found in Pseudomonas fluorescens (strain SBW25).